Consider the following 523-residue polypeptide: NAD(P)H-quinone oxidoreductase subunit 2 (523 aa).

A run of 13 helical transmembrane segments spans residues 29–49 (AVLPEGAVLLAMIATLLVDLA), 57–77 (WVPPICYIGLGSALVLLALQW), 94–114 (LAVAFRAVIATSTLLSLLISW), 132–152 (LAATLGAMLLCGATDLVSIFI), 182–202 (LLVGSAAAAVFLYGASLLYGL), 221–241 (PIAALSLVFVLATVAFKIAAV), 255–275 (PTPVVAFLSVGSKAAGFALAL), 291–311 (LLFTVLAVLSMTLGNVVALAQ), 317–337 (MLAYSSIGQAGFVMIGMVCGT), 345–365 (VLYMAAYLFMNLGAFACIILF), 389–409 (LGLSLCLLSLGGIPPMLGFFG), 424–444 (LLVVVGLITSVISIYYYISVI), and 477–497 (VALIGCVGVTAIGGILSNPLF).

Belongs to the complex I subunit 2 family. In terms of assembly, NDH-1 can be composed of about 15 different subunits; different subcomplexes with different compositions have been identified which probably have different functions.

The protein localises to the cellular thylakoid membrane. The enzyme catalyses a plastoquinone + NADH + (n+1) H(+)(in) = a plastoquinol + NAD(+) + n H(+)(out). It carries out the reaction a plastoquinone + NADPH + (n+1) H(+)(in) = a plastoquinol + NADP(+) + n H(+)(out). Its function is as follows. NDH-1 shuttles electrons from an unknown electron donor, via FMN and iron-sulfur (Fe-S) centers, to quinones in the respiratory and/or the photosynthetic chain. The immediate electron acceptor for the enzyme in this species is believed to be plastoquinone. Couples the redox reaction to proton translocation, and thus conserves the redox energy in a proton gradient. Cyanobacterial NDH-1 also plays a role in inorganic carbon-concentration. This is NAD(P)H-quinone oxidoreductase subunit 2 from Synechococcus sp. (strain CC9902).